Consider the following 37-residue polypeptide: Large ribosomal subunit protein bL36c (37 aa).

This sequence belongs to the bacterial ribosomal protein bL36 family.

The protein localises to the plastid. It is found in the chloroplast. The protein is Large ribosomal subunit protein bL36c of Chloranthus spicatus (Chulantree).